The following is a 226-amino-acid chain: 2-C-methyl-D-erythritol 4-phosphate cytidylyltransferase (226 aa).

It belongs to the IspD/TarI cytidylyltransferase family. IspD subfamily.

The enzyme catalyses 2-C-methyl-D-erythritol 4-phosphate + CTP + H(+) = 4-CDP-2-C-methyl-D-erythritol + diphosphate. Its pathway is isoprenoid biosynthesis; isopentenyl diphosphate biosynthesis via DXP pathway; isopentenyl diphosphate from 1-deoxy-D-xylulose 5-phosphate: step 2/6. Its function is as follows. Catalyzes the formation of 4-diphosphocytidyl-2-C-methyl-D-erythritol from CTP and 2-C-methyl-D-erythritol 4-phosphate (MEP). This is 2-C-methyl-D-erythritol 4-phosphate cytidylyltransferase from Bacillus thuringiensis (strain Al Hakam).